An 832-amino-acid polypeptide reads, in one-letter code: FAST kinase domain-containing protein 1, mitochondrial (832 aa).

The 61-residue stretch at 765 to 825 folds into the RAP domain; it reads VAIEFLDSKA…KDAWIDYLRK (61 aa).

The protein belongs to the FAST kinase family.

It is found in the mitochondrion. Functionally, may regulate the stability of some mitochondrial mRNA species. This Xenopus tropicalis (Western clawed frog) protein is FAST kinase domain-containing protein 1, mitochondrial (fastkd1).